The sequence spans 150 residues: UPF0208 membrane protein VV1_2222 (150 aa).

A run of 2 helical transmembrane segments spans residues 42 to 62 and 70 to 90; these read FGIK…MAFN and AIVM…WLGH.

It belongs to the UPF0208 family.

The protein localises to the cell inner membrane. In Vibrio vulnificus (strain CMCP6), this protein is UPF0208 membrane protein VV1_2222.